A 542-amino-acid polypeptide reads, in one-letter code: Isocitrate lyase (542 aa).

Residue 102–104 coordinates substrate; it reads SGW. Residue Asp-170 coordinates Mg(2+). Cys-208 functions as the Proton acceptor in the catalytic mechanism. Substrate is bound by residues 209–210, Arg-245, 428–432, and Thr-462; these read GH and NLSPS.

It belongs to the isocitrate lyase/PEP mutase superfamily. Isocitrate lyase family. In terms of assembly, homotetramer. Requires Mg(2+) as cofactor.

The protein resides in the glyoxysome. It catalyses the reaction D-threo-isocitrate = glyoxylate + succinate. It carries out the reaction (2S,3R)-3-hydroxybutane-1,2,3-tricarboxylate = pyruvate + succinate. It participates in carbohydrate metabolism; glyoxylate cycle; (S)-malate from isocitrate: step 1/2. Functionally, catalyzes the formation of succinate and glyoxylate from isocitrate, a key step of the glyoxylate cycle, which operates as an anaplerotic route for replenishing the tricarboxylic acid cycle. Required for growth on ethanol or acetate, but dispensable when fermentable carbon sources are available. Also acts on 2-methylisocitrate. The protein is Isocitrate lyase of Kluyveromyces lactis (strain ATCC 8585 / CBS 2359 / DSM 70799 / NBRC 1267 / NRRL Y-1140 / WM37) (Yeast).